Consider the following 615-residue polypeptide: UvrABC system protein C (615 aa).

A GIY-YIG domain is found at 14-91 (TSPGCYIHKD…IKENKPKYNI (78 aa)). The region spanning 196–231 (NKIIDELKGKMAAAAQTMEFERAAEYRDLIQAIGTL) is the UVR domain.

This sequence belongs to the UvrC family. As to quaternary structure, interacts with UvrB in an incision complex.

Its subcellular location is the cytoplasm. Functionally, the UvrABC repair system catalyzes the recognition and processing of DNA lesions. UvrC both incises the 5' and 3' sides of the lesion. The N-terminal half is responsible for the 3' incision and the C-terminal half is responsible for the 5' incision. This Streptococcus pneumoniae (strain ATCC 700669 / Spain 23F-1) protein is UvrABC system protein C.